The primary structure comprises 156 residues: Small ribosomal subunit protein uS7 (156 aa).

The protein belongs to the universal ribosomal protein uS7 family. In terms of assembly, part of the 30S ribosomal subunit. Contacts proteins S9 and S11.

Its function is as follows. One of the primary rRNA binding proteins, it binds directly to 16S rRNA where it nucleates assembly of the head domain of the 30S subunit. Is located at the subunit interface close to the decoding center, probably blocks exit of the E-site tRNA. This chain is Small ribosomal subunit protein uS7, found in Pasteurella multocida (strain Pm70).